The following is a 118-amino-acid chain: Cobalt transport protein CbiN (118 aa).

Helical transmembrane passes span 7 to 27 and 70 to 90; these read INALLLLAVAALAVLPLVLGL and SALFALQAALGAGVLAYYFGL. Positions 99–118 are disordered; the sequence is ERASAASGAAAAPGDAPEGD. Low complexity predominate over residues 102-118; that stretch reads SAASGAAAAPGDAPEGD.

The protein belongs to the CbiN family. In terms of assembly, forms an energy-coupling factor (ECF) transporter complex composed of an ATP-binding protein (A component, CbiO), a transmembrane protein (T component, CbiQ) and 2 possible substrate-capture proteins (S components, CbiM and CbiN) of unknown stoichimetry.

Its subcellular location is the cell membrane. Its pathway is cofactor biosynthesis; adenosylcobalamin biosynthesis. Functionally, part of the energy-coupling factor (ECF) transporter complex CbiMNOQ involved in cobalt import. The sequence is that of Cobalt transport protein CbiN from Streptomyces coelicolor (strain ATCC BAA-471 / A3(2) / M145).